The primary structure comprises 235 residues: Elongation factor Tu (235 aa).

The tr-type G domain occupies Lys-1 to Glu-125. Residue Asn-47–Asp-50 coordinates GTP.

The protein belongs to the TRAFAC class translation factor GTPase superfamily. Classic translation factor GTPase family. EF-Tu/EF-1A subfamily. Monomer.

Its subcellular location is the cytoplasm. The enzyme catalyses GTP + H2O = GDP + phosphate + H(+). GTP hydrolase that promotes the GTP-dependent binding of aminoacyl-tRNA to the A-site of ribosomes during protein biosynthesis. This Leptolyngbya ectocarpi (Phormidium ectocarpi) protein is Elongation factor Tu (tufA).